The following is a 165-amino-acid chain: Cytochrome c-550-like protein (165 aa).

The signal sequence occupies residues 1–38; it reads MPHLDQKLPMRWRIPSRLWAWVGILALLWLGLASPVAA. The heme c site is built by cysteine 83, cysteine 86, histidine 87, and cysteine 137.

Belongs to the cytochrome c family. PsbV subfamily. Requires heme c as cofactor.

The protein resides in the cellular thylakoid membrane. In terms of biological role, possible low-potential cytochrome c. This Synechococcus sp. (strain JA-2-3B'a(2-13)) (Cyanobacteria bacterium Yellowstone B-Prime) protein is Cytochrome c-550-like protein (psbV2).